The following is a 223-amino-acid chain: Superoxide dismutase [Mn], mitochondrial (223 aa).

Residues 1-24 (MNLIIGVAGRLLVGKNYCLNTQRL) constitute a mitochondrion transit peptide. Mn(2+) is bound by residues H50, H98, D184, and H188.

It belongs to the iron/manganese superoxide dismutase family. In terms of assembly, homotetramer. Mn(2+) is required as a cofactor.

The protein resides in the mitochondrion matrix. The enzyme catalyses 2 superoxide + 2 H(+) = H2O2 + O2. Functionally, destroys superoxide anion radicals which are normally produced within the cells and which are toxic to biological systems. The polypeptide is Superoxide dismutase [Mn], mitochondrial (sod-2) (Onchocerca volvulus).